The chain runs to 692 residues: Elongation factor G (692 aa).

The tr-type G domain maps to 8 to 282 (EKTRNIGIMA…AIVDYLPAPT (275 aa)). Residues 17 to 24 (AHIDAGKT), 81 to 85 (DTPGH), and 135 to 138 (NKMD) each bind GTP.

Belongs to the TRAFAC class translation factor GTPase superfamily. Classic translation factor GTPase family. EF-G/EF-2 subfamily.

The protein localises to the cytoplasm. In terms of biological role, catalyzes the GTP-dependent ribosomal translocation step during translation elongation. During this step, the ribosome changes from the pre-translocational (PRE) to the post-translocational (POST) state as the newly formed A-site-bound peptidyl-tRNA and P-site-bound deacylated tRNA move to the P and E sites, respectively. Catalyzes the coordinated movement of the two tRNA molecules, the mRNA and conformational changes in the ribosome. The chain is Elongation factor G from Pelotomaculum thermopropionicum (strain DSM 13744 / JCM 10971 / SI).